We begin with the raw amino-acid sequence, 241 residues long: MTMPFGYASPEQQVRDKSEYARKGIARGRSVVVITYADGILFVAENPSATLHKISEIYDRIAFAAVGKYNEFENLRTAGIRLMDSRGYMYDRRDVTSRALANAYAQTLGAIFTESVKPYEVEIVVAEVGPTTDDDQIYKLTFDGSIADERGFVAIGGASDQVTTSLKEHHRDGQPLADALRVAVQALTVSVPPGLPQNGERVLTAANLEVGMLDRTRARRQFKRIAGPALAELLAQTATSS.

Belongs to the peptidase T1A family. The 20S proteasome core is composed of 14 alpha and 14 beta subunits that assemble into four stacked heptameric rings, resulting in a barrel-shaped structure. The two inner rings, each composed of seven catalytic beta subunits, are sandwiched by two outer rings, each composed of seven alpha subunits. The catalytic chamber with the active sites is on the inside of the barrel. Has a gated structure, the ends of the cylinder being occluded by the N-termini of the alpha-subunits. Is capped by the proteasome-associated ATPase, ARC.

The protein resides in the cytoplasm. It functions in the pathway protein degradation; proteasomal Pup-dependent pathway. Its activity is regulated as follows. The formation of the proteasomal ATPase ARC-20S proteasome complex, likely via the docking of the C-termini of ARC into the intersubunit pockets in the alpha-rings, may trigger opening of the gate for substrate entry. Interconversion between the open-gate and close-gate conformations leads to a dynamic regulation of the 20S proteasome proteolysis activity. Functionally, component of the proteasome core, a large protease complex with broad specificity involved in protein degradation. This Frankia alni (strain DSM 45986 / CECT 9034 / ACN14a) protein is Proteasome subunit alpha.